We begin with the raw amino-acid sequence, 939 residues long: Serine/threonine-protein kinase STE20 (939 aa).

A disordered region spans residues methionine 1–serine 87. At serine 2 the chain carries N-acetylserine. Positions threonine 44 to threonine 57 are enriched in polar residues. A phosphoserine mark is found at serine 87 and serine 165. Threonine 167 is modified (phosphothreonine). The residue at position 169 (serine 169) is a Phosphoserine. Over residues asparagine 176–serine 196 the composition is skewed to polar residues. Disordered stretches follow at residues asparagine 176–lysine 299 and arginine 311–isoleucine 331. A Phosphothreonine modification is found at threonine 203. The segment covering proline 204–asparagine 231 has biased composition (polar residues). Over residues proline 232–proline 243 the composition is skewed to basic residues. Low complexity-rich tracts occupy residues lysine 251–serine 283 and serine 320–serine 330. A CRIB domain is found at isoleucine 337 to glycine 350. Disordered regions lie at residues lysine 407–alanine 487 and asparagine 500–arginine 598. Polar residues-rich tracts occupy residues threonine 408–asparagine 467 and asparagine 500–alanine 527. Position 418 is a phosphoserine (serine 418). The tract at residues proline 434–alanine 499 is BEM1-binding. Residues serine 502, serine 547, and serine 562 each carry the phosphoserine modification. A compositionally biased stretch (low complexity) spans threonine 542–threonine 552. The span at glutamate 569–proline 578 shows a compositional bias: polar residues. Phosphothreonine is present on threonine 573. The span at leucine 584–glutamate 597 shows a compositional bias: basic and acidic residues. The residue at position 585 (serine 585) is a Phosphoserine. One can recognise a Protein kinase domain in the interval tyrosine 620–isoleucine 871. ATP is bound by residues isoleucine 626 to valine 634 and lysine 649. Residue aspartate 739 is the Proton acceptor of the active site. Phosphothreonine is present on threonine 773. Acidic residues predominate over residues alanine 899 to aspartate 908. The segment at alanine 899–lysine 939 is disordered. Serine 924 bears the Phosphoserine mark. Threonine 927 is subject to Phosphothreonine.

It belongs to the protein kinase superfamily. STE Ser/Thr protein kinase family. STE20 subfamily. In terms of assembly, interacts with BEM1, CDC42, CLN2, STE4 and the 14-3-3 proteins BMH1 and BMH2. In terms of processing, autophosphorylated and phosphorylated by the CLN2-CDC28 complex in a cell cycle dependent manner. Autophosphorylated on serine residues.

It is found in the cytoplasm. The protein localises to the nucleus. It catalyses the reaction L-seryl-[protein] + ATP = O-phospho-L-seryl-[protein] + ADP + H(+). It carries out the reaction L-threonyl-[protein] + ATP = O-phospho-L-threonyl-[protein] + ADP + H(+). Its function is as follows. MAP4K component of the MAPK pathway required for the mating pheromone response, haploid invasive growth and diploid pseudohyphal development. Links the pheromone response G-protein beta gamma subunits to downstream signaling components. Needed for mating in haploid cells, induction of a mating-specific gene FUS1, induction of mating-specific morphologies, and pheromone-induced proliferation arrest. Required for the regulation of the actin polarization and bud emergence during cell cycle in G1. Involved in the high osmolarity glycerol (HOG) response. Phosphorylates 'Thr-307' and 'Ser-302' or 'Ser-306' of STE11 and 'Ser-357' of MYO3. Phosphorylates histone H2B to form H2BS10ph during meiosis and H(2)O(2)-induced apoptosis. Its interaction with CDC42 is required for both invasive growth and the formation of pseudohyphae. Its interaction with STE4 is required for the pheromone signaling. This chain is Serine/threonine-protein kinase STE20 (STE20), found in Saccharomyces cerevisiae (strain ATCC 204508 / S288c) (Baker's yeast).